We begin with the raw amino-acid sequence, 263 residues long: Ribosome maturation factor RimP (263 aa).

The interval 192 to 263 (EREMKRDLGI…RGEIDPIEGE (72 aa)) is disordered. A compositionally biased stretch (basic residues) spans 217-231 (PARRNAPKPKLKSTA). The span at 232–257 (KAHEKKPPKNTKEHRLAAERLRRGEI) shows a compositional bias: basic and acidic residues.

This sequence belongs to the RimP family.

The protein resides in the cytoplasm. In terms of biological role, required for maturation of 30S ribosomal subunits. The chain is Ribosome maturation factor RimP from Nitrobacter hamburgensis (strain DSM 10229 / NCIMB 13809 / X14).